Reading from the N-terminus, the 507-residue chain is FLYWCH transcription factor 1 (507 aa).

A compositionally biased stretch (low complexity) spans Met1–Ser26. The tract at residues Met1–Ala51 is disordered. The FLYWCH-type zinc-finger motif lies at Lys135–His192.

Functionally, probable transcription factor. Binds to the DNA sequence motif 5'-[AG]GGCGCCG-3' in the promoters of target genes, including micro-RNA genes, in order to repress expression, and acting redundantly with flh-2. In Caenorhabditis elegans, this protein is FLYWCH transcription factor 1.